Consider the following 360-residue polypeptide: Membrane-bound lytic murein transglycosylase C (360 aa).

An N-terminal signal peptide occupies residues 1 to 16 (MKKFFALALVAPLLIS). Residue C17 is the site of N-palmitoyl cysteine attachment. A lipid anchor (S-diacylglycerol cysteine) is attached at C17.

The protein belongs to the transglycosylase Slt family.

It is found in the cell outer membrane. It carries out the reaction Exolytic cleavage of the (1-&gt;4)-beta-glycosidic linkage between N-acetylmuramic acid (MurNAc) and N-acetylglucosamine (GlcNAc) residues in peptidoglycan, from either the reducing or the non-reducing ends of the peptidoglycan chains, with concomitant formation of a 1,6-anhydrobond in the MurNAc residue.. In terms of biological role, murein-degrading enzyme. May play a role in recycling of muropeptides during cell elongation and/or cell division. This is Membrane-bound lytic murein transglycosylase C from Citrobacter koseri (strain ATCC BAA-895 / CDC 4225-83 / SGSC4696).